Reading from the N-terminus, the 1059-residue chain is Ubiquitin carboxyl-terminal hydrolase 36 (1059 aa).

2 disordered regions span residues 24–49 and 94–148; these read VGNG…DSEM and SNNN…KPKR. The segment covering 94 to 123 has biased composition (low complexity); sequence SNNNNSSSCNGSNFGNSKVVGANGHDNGNN. The span at 130-139 shows a compositional bias: polar residues; that stretch reads QSESTQSGPS. The region spanning 171 to 479 is the USP domain; that stretch reads TGMINVGNTC…NAYIMFYELD (309 aa). Cys180 functions as the Nucleophile in the catalytic mechanism. The active-site Proton acceptor is the His438. A disordered region spans residues 505–673; it reads TVSSSSPTHT…KTPLKSSVKT (169 aa). Residues Ser508 and Ser510 each carry the phosphoserine modification. Polar residues predominate over residues 528-539; the sequence is GYSNGHATGSSN. Low complexity-rich tracts occupy residues 540–560, 592–611, and 633–647; these read AQKT…NGLQ, NGNK…KSVN, and ATAT…RPTA. Positions 655–664 are enriched in basic and acidic residues; that stretch reads MTEDSSDKPK. 2 positions are modified to phosphothreonine: Thr673 and Thr682. Disordered stretches follow at residues 687–893, 926–998, and 1012–1059; these read LVPY…EAST, KELV…RYHN, and KYNR…QSSS. 2 positions are modified to phosphoserine: Ser692 and Ser694. 2 stretches are compositionally biased toward low complexity: residues 729 to 739 and 752 to 765; these read TKTNGGSLTNG and SSSS…ASAA. Residue Ser766 is modified to Phosphoserine. Residues 766-776 show a composition bias toward acidic residues; it reads SDDEDADEEEE. Positions 779–795 are enriched in polar residues; sequence KLTNGWQPQKQSQSLTQ. Residues 799–808 show a composition bias toward pro residues; sequence PPSPKTPPSP. At Ser801 the chain carries Phosphoserine. Phosphothreonine is present on Thr804. A Phosphoserine modification is found at Ser807. Residues 825–839 show a composition bias toward acidic residues; that stretch reads DNEDEDDDDDEDEEE. Composition is skewed to polar residues over residues 842-862 and 876-893; these read QVVS…STTP and KSQQ…EAST. Residues Thr846 and Thr861 each carry the phosphothreonine modification. Residues 926–940 are compositionally biased toward basic and acidic residues; sequence KELVAEAREQRQHDH. A compositionally biased stretch (low complexity) spans 1048-1059; the sequence is QQQQQQSQQSSS.

Belongs to the peptidase C19 family. Interacts with atms/PAF1, but not with CycT.

Its subcellular location is the nucleus. It is found in the nucleolus. The enzyme catalyses Thiol-dependent hydrolysis of ester, thioester, amide, peptide and isopeptide bonds formed by the C-terminal Gly of ubiquitin (a 76-residue protein attached to proteins as an intracellular targeting signal).. In terms of biological role, required for maintaining multiple types of adult stem cells, including male and female germline, epithelial follicle cell and intestinal stem cells. May function as a transcriptional repressor by continually deubiquiting histone H2B at the promoters of genes critical for cellular differentiation, thereby preventing histone H3 'Lys-4' trimethylation (H3K4). Controls selective autophagy activation by ubiquitinated proteins. This Drosophila pseudoobscura pseudoobscura (Fruit fly) protein is Ubiquitin carboxyl-terminal hydrolase 36 (Usp36).